The sequence spans 506 residues: MDLAFPHVCLWTLLAFVLTWTVFYVNNRRKKVAKLPDAATEVRRDGDADVIIVGAGVGGSALAYALAKDGRRVHVIERDMREPVRMMGEFMQPGGRLLLSKLGLEDCLEGIDEQIATGLAVYKDGQKALVSFPEDNDFPYEPTGRAFYNGRFVQRLRQKASSLPTVQLEEGTVKSLIEEKGVIKGVTYKNSAGEETTAFAPLTVVCDGCYSNLRRSVNDNNAEVISYQVGYVSKNCQLEDPEKLKLIMSKPSFTMLYQISSTDVRCVMEIFPGNIPSISNGEMAVYLKNTMAPQVPPELRKIFLKGIDEGAQIKAMPTKRMEATLSEKQGVIVLGDAFNMRHPAIASGMMVVLSDILILRRLLQPLRNLSDANKVSEVIKSFYVIRKPMSATVNTLGNAFSQVLIASTDEAKEAMRQGCFDYLSSGGFRTSGMMALLGGMNPRPLSLIFHLCGITLSSIGQLLSPFPSPLGIWHSLRLFGAEGVSQMLSPAYAAAYRKSYMTATAL.

2 consecutive transmembrane segments (helical) span residues 3–23 (LAFPHVCLWTLLAFVLTWTVF) and 47–67 (DADVIIVGAGVGGSALAYALA). FAD contacts are provided by residues 57-58 (VG), 77-78 (ER), R85, F90, R157, V173, D336, and M349. Residues 447-467 (LIFHLCGITLSSIGQLLSPFP) form a helical membrane-spanning segment.

The protein belongs to the squalene monooxygenase family. FAD is required as a cofactor.

Its subcellular location is the membrane. It carries out the reaction squalene + reduced [NADPH--hemoprotein reductase] + O2 = (S)-2,3-epoxysqualene + oxidized [NADPH--hemoprotein reductase] + H2O + H(+). Its pathway is terpene metabolism; lanosterol biosynthesis; lanosterol from farnesyl diphosphate: step 2/3. Its function is as follows. Catalyzes the stereospecific oxidation of squalene to (S)-2,3-epoxysqualene, and is considered to be a rate-limiting enzyme in steroid biosynthesis. The polypeptide is Squalene monooxygenase 1,1 (SQP1,1) (Brassica napus (Rape)).